Reading from the N-terminus, the 1085-residue chain is DNA mismatch repair protein MutS (1085 aa).

The tract at residues 533 to 564 is disordered; it reads DEDLFGEEEQNAPPVGSSNHAVGTQPSADDEA. Residues 548–559 are compositionally biased toward polar residues; the sequence is GSSNHAVGTQPS. Residue 812–819 coordinates ATP; that stretch reads GPNMSGKS. The tract at residues 997-1042 is disordered; sequence ERRAPRSAPPTVPARGDDRRSAGRASSSGAGAARGEQGRTLPDGQL. Over residues 1019–1031 the composition is skewed to low complexity; sequence GRASSSGAGAARG.

The protein belongs to the DNA mismatch repair MutS family.

Its function is as follows. This protein is involved in the repair of mismatches in DNA. It is possible that it carries out the mismatch recognition step. This protein has a weak ATPase activity. The polypeptide is DNA mismatch repair protein MutS (Roseiflexus sp. (strain RS-1)).